A 370-amino-acid chain; its full sequence is MTQKEISIIHPRPSSIVAALYTLRDLNVDVAILHGPPGCSFKHARLLEEDGIHVVTTGLDENGFVFGGHDRLVEVINKSIELFNPKILGVVGTCASMIIGEEMHDAVLEANPDIPVIEVEVHAGYHNNTRGVLFALESALDAGIIDRKEFERQEYLLIKATEVEKRFGAASKEYLAPSRGDLKYKVAKRLIELLKEGKKGLVIMNAKKETGYMFADITLAVSEVAAALGKKENLVNMANIDPELGLPRVRQHAQYIMRDFIAHGVEIHEIIGGMDEYPIAGEKVSELIKEKYSDYDFAVITGVPHAIPMENLQHMELISITNGPRQVLPLKEMGHEHVLVEIDLHPKTLGVSEIVESEFGATLREVAKEA.

This sequence belongs to the NifD/NifK/NifE/NifN family. In terms of assembly, homodimer or monomer. The Ni-sirohydrochlorin a,c-diamide reductive cyclase complex is composed of a NifH homolog component CfbC and a NifD homolog component CfbD. Requires [4Fe-4S] cluster as cofactor.

The enzyme catalyses Ni-sirohydrochlorin a,c-diamide + 3 AH2 + ATP + H2O = 15,17(3)-seco-F430-17(3)-acid + 3 A + ADP + phosphate. Functionally, involved in the biosynthesis of the unique nickel-containing tetrapyrrole coenzyme F430, the prosthetic group of methyl-coenzyme M reductase (MCR), which plays a key role in methanogenesis and anaerobic methane oxidation. Catalyzes both the six-electron reduction of the tetrahydroporphyrin ring system and the gamma-lactamization of the c-acetamide side chain of Ni-sirohydrochlorin a,c-diamide to yield 15,17(3)-seco-F430-17(3)-acid (seco-F430), the last intermediate in the biosynthesis of the coenzyme F430. The protein is Ni-sirohydrochlorin a,c-diamide reductive cyclase complex, component CfbD of Methanosarcina acetivorans (strain ATCC 35395 / DSM 2834 / JCM 12185 / C2A).